Reading from the N-terminus, the 1286-residue chain is DNA-directed RNA polymerase 147 kDa polypeptide (1286 aa).

It belongs to the poxviridae DNA-directed RNA polymerase 147 kDa subunit family. The DNA-dependent RNA polymerase used for intermediate and late genes expression consists of eight subunits Rpo30/OPG66, Rpo7/OPG90, Rpo22/OPG103, Rpo147/OPG105, Rpo18/OPG119, Rpo19/OPG131, Rpo132/OPG151 and Rpo35/OPG156. The same holoenzyme, with the addition of the transcription-specificity factor OPG109, is used for early gene expression.

It is found in the virion. The catalysed reaction is RNA(n) + a ribonucleoside 5'-triphosphate = RNA(n+1) + diphosphate. Functionally, part of the DNA-dependent RNA polymerase which catalyzes the transcription of viral DNA into RNA using the four ribonucleoside triphosphates as substrates. Responsible for the transcription of early, intermediate and late genes. DNA-dependent RNA polymerase associates with the early transcription factor (ETF), itself composed of OPG118 and OPG133, thereby allowing the early genes transcription. Late transcription, and probably also intermediate transcription, require newly synthesized RNA polymerase. This Monkeypox virus protein is DNA-directed RNA polymerase 147 kDa polypeptide (OPG105).